The following is an 81-amino-acid chain: Cytoplasmic envelopment protein 3 (81 aa).

The N-myristoyl glycine; by host moiety is linked to residue Gly-2. A Di-leucine-like internalization motif motif is present at residues 22 to 23 (LV). The interval 41-47 (DFDENVT) is asp/Glu-rich (acidic). The interval 47–81 (TEDADKSTQRRPRVIDVTPKRKPSGKSSHSKCAKC) is disordered. Positions 66-81 (KRKPSGKSSHSKCAKC) are enriched in basic residues.

It belongs to the herpesviridae cytoplasmic envelopment protein 3 family. As to quaternary structure, interacts with cytoplasmic envelopment protein 2; this interaction is essential for the proper localization of each protein to the assembly complex and thus for the production of infectious virus. Myristoylation and palmitoylation (probably on one or more of the nearby cysteines at the N-terminus) enable membrane-binding and Golgi apparatus-specific targeting and are essential for efficient packaging. Post-translationally, phosphorylated. Phosphorylation does not seem to be required for recycling to the host Golgi apparatus. Packaging is selective for underphosphorylated forms.

The protein resides in the virion tegument. It localises to the virion membrane. Its subcellular location is the host cell membrane. The protein localises to the host Golgi apparatus membrane. Functionally, plays an important role in the cytoplasmic envelopment of tegument proteins and capsids during the assembly and egress processes. Also participates in viral entry at the fusion step probably by regulating the core fusion machinery. This chain is Cytoplasmic envelopment protein 3, found in Homo sapiens (Human).